The primary structure comprises 413 residues: Peptidase T (413 aa).

Residue histidine 82 coordinates Zn(2+). Aspartate 84 is an active-site residue. Aspartate 144 lines the Zn(2+) pocket. Glutamate 178 (proton acceptor) is an active-site residue. The Zn(2+) site is built by glutamate 179, aspartate 201, and histidine 383.

It belongs to the peptidase M20B family. As to quaternary structure, homotrimer. Requires Zn(2+) as cofactor.

The protein resides in the cytoplasm. The catalysed reaction is Release of the N-terminal residue from a tripeptide.. Totally inhibited by EDTA, EGTA, and 1,10-phenanthroline. Strongly inhibited by divalent cations such as Cu(2+), Cd(2+), Co(2+) and Mn(2+). Partially inhibited by the reducing agents 2-mercaptoethanol and dithiothreitol. Functionally, cleaves the N-terminal amino acid of tripeptides. Shows broad substrate specificity, exhibiting maximum activity against hydrophobic tripeptides, with the highest activity for Met-Gly-Gly. Therefore this enzyme may play an important role in flavor formation during cheese ripening. Is also able to slowly hydrolyze some hydrophobic dipeptides, but displays no activity against tetrapeptides and the tripeptide Phe-Gly-Gly. In Lactobacillus helveticus (Lactobacillus suntoryeus), this protein is Peptidase T (pepT).